Reading from the N-terminus, the 380-residue chain is MGIHGLTKLIADQAPGAIKEQDIKNYFGRKIAIDASMCLYQFLIAVRQDGNVLQNEDGETTSHLMGMFYRTIRMLEHGIKPVYVFDGKPPQLKSAELEKRGEKRAEAEKMLAQAQELGEQENIDKFSKRLVKVTKQHNDECKKLLTLMGVPYIEAPCEAEATCAALVKAGKVFATATEDMDGLTFGTNVLLRHLTASEAKKLPIQELHYSRILQDIGLTNEQFIDLCIPLGCDYCGTIKGIGPKRAIDLIKQHGSIEEILENIDSSKHPAPEDWLYKEARGLFLKAEVVDCSTVDLKWSEPDEEGLIQFMCNEKQFSEDRMRNGCKKILKSRQGSTQGRLDSFFSITGSLSSKRKEPELKGSAKKKQKTGATPGKFKKGK.

The tract at residues 1-104 (MGIHGLTKLI…AELEKRGEKR (104 aa)) is N-domain. Mg(2+) is bound at residue aspartate 34. Residues arginine 47 and arginine 70 each contribute to the DNA site. Mg(2+)-binding residues include aspartate 86, glutamate 158, glutamate 160, aspartate 179, and aspartate 181. The segment at 122 to 253 (NIDKFSKRLV…KRAIDLIKQH (132 aa)) is I-domain. Glutamate 158 provides a ligand contact to DNA. DNA contacts are provided by glycine 231 and aspartate 233. Residue aspartate 233 participates in Mg(2+) binding. Residues 336–344 (TQGRLDSFF) form an interaction with PCNA region. The segment at 351–380 (SSKRKEPELKGSAKKKQKTGATPGKFKKGK) is disordered.

The protein belongs to the XPG/RAD2 endonuclease family. FEN1 subfamily. In terms of assembly, interacts with PCNA. Three molecules of fen1 bind to one PCNA trimer with each molecule binding to one PCNA monomer. PCNA stimulates the nuclease activity without altering cleavage specificity. It depends on Mg(2+) as a cofactor. Phosphorylated. Phosphorylation upon DNA damage induces relocalization to the nuclear plasma.

The protein localises to the nucleus. It localises to the nucleolus. It is found in the nucleoplasm. The protein resides in the mitochondrion. In terms of biological role, structure-specific nuclease with 5'-flap endonuclease and 5'-3' exonuclease activities involved in DNA replication and repair. During DNA replication, cleaves the 5'-overhanging flap structure that is generated by displacement synthesis when DNA polymerase encounters the 5'-end of a downstream Okazaki fragment. It enters the flap from the 5'-end and then tracks to cleave the flap base, leaving a nick for ligation. Also involved in the long patch base excision repair (LP-BER) pathway, by cleaving within the apurinic/apyrimidinic (AP) site-terminated flap. Acts as a genome stabilization factor that prevents flaps from equilibrating into structures that lead to duplications and deletions. Also possesses 5'-3' exonuclease activity on nicked or gapped double-stranded DNA, and exhibits RNase H activity. Also involved in replication and repair of rDNA and in repairing mitochondrial DNA. This chain is Flap endonuclease 1 (fen1), found in Anoplopoma fimbria (Sablefish).